The following is a 76-amino-acid chain: Frizzled-3 (76 aa).

At 1–5 the chain is on the cytoplasmic side; that stretch reads YPERP. Residues 6-26 form a helical membrane-spanning segment; it reads IIFYAVCYMMVSLIFFIGFLL. The Extracellular segment spans residues 27–54; sequence EDRVACNASSPAQYKASTVTQGSHNKAC. A glycan (N-linked (GlcNAc...) asparagine) is linked at N33. Residues 55–75 form a helical membrane-spanning segment; that stretch reads TMLFMVLYFFTMAGSVWWVIL. Position 76 (R76) is a topological domain, cytoplasmic.

It belongs to the G-protein coupled receptor Fz/Smo family.

The protein resides in the membrane. It localises to the cell membrane. It is found in the cell surface. The protein localises to the apical cell membrane. Functionally, receptor for Wnt proteins. Most of frizzled receptors are coupled to the beta-catenin canonical signaling pathway, which leads to the activation of disheveled proteins, inhibition of GSK-3 kinase, nuclear accumulation of beta-catenin and activation of Wnt target genes. A second signaling pathway involving PKC and calcium fluxes has been seen for some family members, but it is not yet clear if it represents a distinct pathway or if it can be integrated in the canonical pathway, as PKC seems to be required for Wnt-mediated inactivation of GSK-3 kinase. Both pathways seem to involve interactions with G-proteins. May be involved in transduction and intercellular transmission of polarity information during tissue morphogenesis and/or in differentiated tissues. Plays a role in controlling early axon growth and guidance processes necessary for the formation of a subset of central and peripheral major fiber tracts. Involved in the migration of cranial neural crest cells. May also be implicated in the transmission of sensory information from the trunk and limbs to the brain. Controls commissural sensory axons guidance after midline crossing along the anterior-posterior axis in the developing spinal cord in a Wnt-dependent signaling pathway. Together with FZD6, is involved in the neural tube closure and plays a role in the regulation of the establishment of planar cell polarity (PCP). Promotes neurogenesis by maintaining sympathetic neuroblasts within the cell cycle in a beta-catenin-dependent manner. The chain is Frizzled-3 (FZD3) from Gallus gallus (Chicken).